The chain runs to 61 residues: Small ribosomal subunit protein uS14 (61 aa).

Zn(2+) contacts are provided by C24, C27, C40, and C43.

This sequence belongs to the universal ribosomal protein uS14 family. Zinc-binding uS14 subfamily. As to quaternary structure, part of the 30S ribosomal subunit. Contacts proteins S3 and S10. Requires Zn(2+) as cofactor.

Binds 16S rRNA, required for the assembly of 30S particles and may also be responsible for determining the conformation of the 16S rRNA at the A site. This chain is Small ribosomal subunit protein uS14, found in Desulfovibrio desulfuricans (strain ATCC 27774 / DSM 6949 / MB).